The sequence spans 487 residues: Variant surface glycoprotein WRATAT B (487 aa).

The N-terminal stretch at 1–19 is a signal peptide; that stretch reads MWIILALLTLAGSRVAHGA. Residues N71, N84, N418, and N465 are each glycosylated (N-linked (GlcNAc...) asparagine). Positions 443–468 are disordered; that stretch reads KPKAGTEAATTGPGERDAGATANTTG. Residue S470 is the site of GPI-anchor amidated serine attachment. Residues 471 to 487 constitute a propeptide, removed in mature form; the sequence is NSFVIKTSPLLFAFLLF.

The protein resides in the cell membrane. In terms of biological role, VSG forms a coat on the surface of the parasite. The trypanosome evades the immune response of the host by expressing a series of antigenically distinct VSGs from an estimated 1000 VSG genes. This Trypanosoma brucei rhodesiense protein is Variant surface glycoprotein WRATAT B.